Consider the following 425-residue polypeptide: Serine hydroxymethyltransferase (425 aa).

(6S)-5,6,7,8-tetrahydrofolate-binding positions include leucine 125 and 129–131 (GHL). Lysine 234 bears the N6-(pyridoxal phosphate)lysine mark.

It belongs to the SHMT family. In terms of assembly, homodimer. Requires pyridoxal 5'-phosphate as cofactor.

The protein localises to the cytoplasm. It carries out the reaction (6R)-5,10-methylene-5,6,7,8-tetrahydrofolate + glycine + H2O = (6S)-5,6,7,8-tetrahydrofolate + L-serine. Its pathway is one-carbon metabolism; tetrahydrofolate interconversion. It participates in amino-acid biosynthesis; glycine biosynthesis; glycine from L-serine: step 1/1. Its function is as follows. Catalyzes the reversible interconversion of serine and glycine with tetrahydrofolate (THF) serving as the one-carbon carrier. This reaction serves as the major source of one-carbon groups required for the biosynthesis of purines, thymidylate, methionine, and other important biomolecules. Also exhibits THF-independent aldolase activity toward beta-hydroxyamino acids, producing glycine and aldehydes, via a retro-aldol mechanism. In Marinomonas sp. (strain MWYL1), this protein is Serine hydroxymethyltransferase.